The chain runs to 736 residues: Polyribonucleotide nucleotidyltransferase (736 aa).

The Mg(2+) site is built by Asp488 and Asp494. The region spanning 555–614 (PMVQTLEIQKEKIRDVIGLGGKVIKELCKTFDVEIDISENGEVKVWGNVGENVKKAVQSI) is the KH domain. In terms of domain architecture, S1 motif spans 624 to 692 (GDIFDGEVVK…HKNRVKLTLR (69 aa)).

Belongs to the polyribonucleotide nucleotidyltransferase family. Mg(2+) serves as cofactor.

It is found in the cytoplasm. It carries out the reaction RNA(n+1) + phosphate = RNA(n) + a ribonucleoside 5'-diphosphate. Its function is as follows. Involved in mRNA degradation. Catalyzes the phosphorolysis of single-stranded polyribonucleotides processively in the 3'- to 5'-direction. The chain is Polyribonucleotide nucleotidyltransferase from Orientia tsutsugamushi (strain Ikeda) (Rickettsia tsutsugamushi).